The primary structure comprises 764 residues: Molybdenum cofactor sulfurase 3 (764 aa).

Lysine 228 is subject to N6-(pyridoxal phosphate)lysine. Cysteine 394 is a catalytic residue. The MOSC domain maps to 607 to 762; the sequence is LRLLKQSDEE…LYCNSVVEGL (156 aa).

This sequence belongs to the class-V pyridoxal-phosphate-dependent aminotransferase family. MOCOS subfamily. Pyridoxal 5'-phosphate serves as cofactor.

The enzyme catalyses Mo-molybdopterin + L-cysteine + AH2 = thio-Mo-molybdopterin + L-alanine + A + H2O. Functionally, sulfurates the molybdenum cofactor. Sulfation of molybdenum is essential for xanthine dehydrogenase (XDH) and aldehyde oxidase (ADO) enzymes in which molybdenum cofactor is liganded by 1 oxygen and 1 sulfur atom in active form. The protein is Molybdenum cofactor sulfurase 3 of Aedes aegypti (Yellowfever mosquito).